Consider the following 427-residue polypeptide: Glutamate-1-semialdehyde 2,1-aminomutase (427 aa).

N6-(pyridoxal phosphate)lysine is present on Lys265.

It belongs to the class-III pyridoxal-phosphate-dependent aminotransferase family. HemL subfamily. As to quaternary structure, homodimer. Pyridoxal 5'-phosphate is required as a cofactor.

Its subcellular location is the cytoplasm. The enzyme catalyses (S)-4-amino-5-oxopentanoate = 5-aminolevulinate. The protein operates within porphyrin-containing compound metabolism; protoporphyrin-IX biosynthesis; 5-aminolevulinate from L-glutamyl-tRNA(Glu): step 2/2. This Pseudomonas syringae pv. syringae (strain B728a) protein is Glutamate-1-semialdehyde 2,1-aminomutase.